The sequence spans 525 residues: Peptide chain release factor 3 (525 aa).

The region spanning 9–276 is the tr-type G domain; that stretch reads AKRRTFAIIS…GFTRYAPAPQ (268 aa). Residues 18-25, 86-90, and 140-143 contribute to the GTP site; these read SHPDAGKT, DTPGH, and NKFD.

Belongs to the TRAFAC class translation factor GTPase superfamily. Classic translation factor GTPase family. PrfC subfamily.

It localises to the cytoplasm. Its function is as follows. Increases the formation of ribosomal termination complexes and stimulates activities of RF-1 and RF-2. It binds guanine nucleotides and has strong preference for UGA stop codons. It may interact directly with the ribosome. The stimulation of RF-1 and RF-2 is significantly reduced by GTP and GDP, but not by GMP. The chain is Peptide chain release factor 3 from Francisella tularensis subsp. tularensis (strain FSC 198).